The following is a 153-amino-acid chain: MTSLLLFGASEGGLFDFDATLPLMAVQVVLLTFILNALFFKPVGRVVEEREDYVTSSLADAKKKLAEVEKLESDLKNQLKEARLAAQSVINEAETDSENLYREALALATAEANASREEARREIDSQRESALNQLRSDAEKLGDLIVERLLASK.

The helical transmembrane segment at 20–40 (TLPLMAVQVVLLTFILNALFF) threads the bilayer.

Belongs to the ATPase B chain family. F-type ATPases have 2 components, F(1) - the catalytic core - and F(0) - the membrane proton channel. F(1) has five subunits: alpha(3), beta(3), gamma(1), delta(1), epsilon(1). F(0) has four main subunits: a(1), b(1), b'(1) and c(10-14). The alpha and beta chains form an alternating ring which encloses part of the gamma chain. F(1) is attached to F(0) by a central stalk formed by the gamma and epsilon chains, while a peripheral stalk is formed by the delta, b and b' chains.

The protein resides in the cellular thylakoid membrane. Functionally, f(1)F(0) ATP synthase produces ATP from ADP in the presence of a proton or sodium gradient. F-type ATPases consist of two structural domains, F(1) containing the extramembraneous catalytic core and F(0) containing the membrane proton channel, linked together by a central stalk and a peripheral stalk. During catalysis, ATP synthesis in the catalytic domain of F(1) is coupled via a rotary mechanism of the central stalk subunits to proton translocation. Component of the F(0) channel, it forms part of the peripheral stalk, linking F(1) to F(0). The b'-subunit is a diverged and duplicated form of b found in plants and photosynthetic bacteria. The protein is ATP synthase subunit b' of Prochlorococcus marinus (strain MIT 9211).